Reading from the N-terminus, the 672-residue chain is MTRVLEPAEPILSNDGTPYSPRYDDVYHSARGGLAQAHHVFLGGNGLPEGWAGREQFVIVETGFGQGLNFLATWQAWRSDPQRCRRLHFVSIEKHPFTREGLARLHAHAGLGDLLPLSDQLQQQWPDALPGLHRLSFEDGAVTLTLALGDVETMLPKLVLGADAFYLDGFSPSRNAEMWSDTVFRGLARLARIGATLATYTAAGFVRRGLTAAGFEAHKAPGFGGKRDMTVARFAPVWKNRRHAPPEAAQWAERHAIVIGAGLAGCAVTERLAARGWRVTLLDAHDGPARQTSCHRAAAMHAHVSADDSFLSRLSRAGNLHALRAWGALEAAGYPVGWHGTGVLQIGEDDAENAAQQAALAELRFPESFVRWMSPQEATEQHGATVPRGGLWFPKGGWVAPPDICRAQLAKAGAAVDALFNCRVAAIRRIGDAWQALADDGGVLAAAPVLVLANAYEADRLTSGQFLALRRVRGQLTDLAPAQAEALGGWPDCVVTGGGYLLPRDAAGGARMGSSYEADEGPLVERPEVHAANLDRLASMLPDRASQIAQIDPATLQGYVGVRTVTYNRLPLVGRIADDAQALSRAAALRGAHLRDLPRLPGLYAALAYASRGLTWAALCAELIASQIEGEPLPLEADLADAIDPARLLLRALRHGHAQAPESAGPGVDAAG.

The segment at 1–235 is tRNA (mnm(5)s(2)U34)-methyltransferase; the sequence is MTRVLEPAEP…KRDMTVARFA (235 aa). The tract at residues 259 to 672 is FAD-dependent cmnm(5)s(2)U34 oxidoreductase; that stretch reads IGAGLAGCAV…SAGPGVDAAG (414 aa).

In the N-terminal section; belongs to the methyltransferase superfamily. tRNA (mnm(5)s(2)U34)-methyltransferase family. This sequence in the C-terminal section; belongs to the DAO family. FAD is required as a cofactor.

The protein localises to the cytoplasm. It carries out the reaction 5-aminomethyl-2-thiouridine(34) in tRNA + S-adenosyl-L-methionine = 5-methylaminomethyl-2-thiouridine(34) in tRNA + S-adenosyl-L-homocysteine + H(+). Functionally, catalyzes the last two steps in the biosynthesis of 5-methylaminomethyl-2-thiouridine (mnm(5)s(2)U) at the wobble position (U34) in tRNA. Catalyzes the FAD-dependent demodification of cmnm(5)s(2)U34 to nm(5)s(2)U34, followed by the transfer of a methyl group from S-adenosyl-L-methionine to nm(5)s(2)U34, to form mnm(5)s(2)U34. This is tRNA 5-methylaminomethyl-2-thiouridine biosynthesis bifunctional protein MnmC from Cupriavidus metallidurans (strain ATCC 43123 / DSM 2839 / NBRC 102507 / CH34) (Ralstonia metallidurans).